The following is an 89-amino-acid chain: Sec-independent protein translocase protein TatA (89 aa).

A helical membrane pass occupies residues 1–21 (MFGLSPAQLIILLVVILLIFG).

The protein belongs to the TatA/E family. As to quaternary structure, the Tat system comprises two distinct complexes: a TatABC complex, containing multiple copies of TatA, TatB and TatC subunits, and a separate TatA complex, containing only TatA subunits. Substrates initially bind to the TatABC complex, which probably triggers association of the separate TatA complex to form the active translocon.

It is found in the cell inner membrane. Functionally, part of the twin-arginine translocation (Tat) system that transports large folded proteins containing a characteristic twin-arginine motif in their signal peptide across membranes. TatA could form the protein-conducting channel of the Tat system. The protein is Sec-independent protein translocase protein TatA of Haemophilus influenzae (strain ATCC 51907 / DSM 11121 / KW20 / Rd).